A 258-amino-acid chain; its full sequence is 1-(5-phosphoribosyl)-5-[(5-phosphoribosylamino)methylideneamino] imidazole-4-carboxamide isomerase 2 (258 aa).

The Proton acceptor role is filled by aspartate 14. Aspartate 140 (proton donor) is an active-site residue.

This sequence belongs to the HisA/HisF family.

It localises to the cytoplasm. The catalysed reaction is 1-(5-phospho-beta-D-ribosyl)-5-[(5-phospho-beta-D-ribosylamino)methylideneamino]imidazole-4-carboxamide = 5-[(5-phospho-1-deoxy-D-ribulos-1-ylimino)methylamino]-1-(5-phospho-beta-D-ribosyl)imidazole-4-carboxamide. It functions in the pathway amino-acid biosynthesis; L-histidine biosynthesis; L-histidine from 5-phospho-alpha-D-ribose 1-diphosphate: step 4/9. This Photorhabdus laumondii subsp. laumondii (strain DSM 15139 / CIP 105565 / TT01) (Photorhabdus luminescens subsp. laumondii) protein is 1-(5-phosphoribosyl)-5-[(5-phosphoribosylamino)methylideneamino] imidazole-4-carboxamide isomerase 2 (hisA2).